Here is a 78-residue protein sequence, read N- to C-terminus: Large ribosomal subunit protein bL28 (78 aa).

Positions 1–31 are disordered; the sequence is MAAHCQVTGAEPGFGHSISHSHRRNKRRFDP.

The protein belongs to the bacterial ribosomal protein bL28 family.

The sequence is that of Large ribosomal subunit protein bL28 from Arthrobacter sp. (strain FB24).